The following is a 301-amino-acid chain: Lycopene elongase/hydratase (301 aa).

A disordered region spans residues 1 to 20 (MSADMAAQSESGEGGDDGRA). 9 helical membrane-spanning segments follow: residues 39 to 59 (FWLYLAGPVVVGVAAAASALA), 61 to 81 (LFGLEPVALFAYFLVPANVFL), 110 to 130 (PVNTVVVAASGLLGVGLFAVA), 133 to 153 (VAWPWLAAHFFLAVEYSAPPF), 160 to 180 (LLDSVSNGLYVLPGVAAYAAV), 186 to 206 (PMLAVAGAWLWTMGMHTFSAI), 229 to 249 (TYWYCAATWVLAAVAFAAVDL), 252 to 272 (GALLAAYPVVVLGIVAAGVDV), and 276 to 296 (YWWYPVINTVVGMLITLGALW).

This sequence belongs to the UbiA prenyltransferase family.

It is found in the cell membrane. It carries out the reaction all-trans-lycopene + dimethylallyl diphosphate + H2O = dihydroisopentenyldehydrorhodopin + diphosphate. It catalyses the reaction isopentenyldehydrorhodopin + dimethylallyl diphosphate + H2O = dihydrobisanhydrobacterioruberin + diphosphate. The protein operates within carotenoid biosynthesis. In terms of biological role, involved in the biosynthesis of the acyclic C50 carotenoid bacterioruberin (BR). Acts as a bifunctional elongase/hydratase that catalyzes the elongation of lycopene by attaching a C(5) isoprene unit at C-2, as well as the hydroxylation of the previous end of the molecule. The enzyme acts at both ends of the substrate, and catalyzes the conversion of lycopene to the C(45) intermediate dihydroisopentenyldehydrorhodopin (DH-IDR) and the conversion of isopentenyldehydrorhodopin (IDR) to the C(50) carotenoid dihydrobisanhydrobacterioruberin (DH-BABR). Can also catalyze the conversion of lycopene to tetrahydrobisanhydrobacterioruberin (TH-BABR). The chain is Lycopene elongase/hydratase from Haloferax volcanii (strain ATCC 29605 / DSM 3757 / JCM 8879 / NBRC 14742 / NCIMB 2012 / VKM B-1768 / DS2) (Halobacterium volcanii).